The following is a 389-amino-acid chain: Protein P4 (389 aa).

In Rice tungro bacilliform virus (isolate Philippines) (RTBV), this protein is Protein P4.